Here is a 357-residue protein sequence, read N- to C-terminus: Fructose-bisphosphate aldolase, cytoplasmic isozyme (357 aa).

R53 and K142 together coordinate substrate. The Proton acceptor role is filled by E183. K225 serves as the catalytic Schiff-base intermediate with dihydroxyacetone-P.

This sequence belongs to the class I fructose-bisphosphate aldolase family.

It localises to the cytoplasm. It catalyses the reaction beta-D-fructose 1,6-bisphosphate = D-glyceraldehyde 3-phosphate + dihydroxyacetone phosphate. It participates in carbohydrate degradation; glycolysis; D-glyceraldehyde 3-phosphate and glycerone phosphate from D-glucose: step 4/4. The sequence is that of Fructose-bisphosphate aldolase, cytoplasmic isozyme from Spinacia oleracea (Spinach).